Here is a 721-residue protein sequence, read N- to C-terminus: Dipeptidyl-peptidase 5 (721 aa).

The signal sequence occupies residues 1-18; that stretch reads MGAFRWLSIAAAASTALA. 4 N-linked (GlcNAc...) asparagine glycosylation sites follow: asparagine 75, asparagine 94, asparagine 151, and asparagine 254. Residues 271 to 297 are disordered; the sequence is ARPINGPDSPGTPKGIKGDSSSPVFSP. N-linked (GlcNAc...) asparagine glycosylation is found at asparagine 380 and asparagine 450. Serine 560 functions as the Charge relay system in the catalytic mechanism. Asparagine 607 carries an N-linked (GlcNAc...) asparagine glycan. Catalysis depends on charge relay system residues aspartate 643 and histidine 675.

Belongs to the peptidase S9C family. Post-translationally, N-glycosylated. As to expression, expressed in mycelia and conidia.

It is found in the secreted. May be involved in metabolism of dipeptides or may affect host defense mechanisms. Has a substrate specificity limited to the hydrolysis of X-Ala, His-Ser, and Ser-Tyr dipeptides at a neutral pH optimum. This is Dipeptidyl-peptidase 5 from Aspergillus fumigatus (strain CBS 144.89 / FGSC A1163 / CEA10) (Neosartorya fumigata).